The sequence spans 284 residues: Pantothenate synthetase (284 aa).

Residue 30 to 37 (MGNLHDGH) coordinates ATP. The Proton donor role is filled by His37. Gln61 contributes to the (R)-pantoate binding site. Position 61 (Gln61) interacts with beta-alanine. Residue 149-152 (GEKD) participates in ATP binding. Gln155 serves as a coordination point for (R)-pantoate. Residues Val178 and 186–189 (LSSR) contribute to the ATP site.

It belongs to the pantothenate synthetase family. Homodimer.

Its subcellular location is the cytoplasm. The enzyme catalyses (R)-pantoate + beta-alanine + ATP = (R)-pantothenate + AMP + diphosphate + H(+). It participates in cofactor biosynthesis; (R)-pantothenate biosynthesis; (R)-pantothenate from (R)-pantoate and beta-alanine: step 1/1. Its function is as follows. Catalyzes the condensation of pantoate with beta-alanine in an ATP-dependent reaction via a pantoyl-adenylate intermediate. In Cronobacter sakazakii (strain ATCC BAA-894) (Enterobacter sakazakii), this protein is Pantothenate synthetase.